The primary structure comprises 352 residues: MVFRIASSPYTHNQRQTSRIMLLVLIAALPGVAAQTWFFGWGTLFQIVLAAVTALFAEAIVLSLRKQSIASRLKDYSALLTGLLLAVSIPPLAPWWMIVLGTGFAIIIAKQLYGGLGQNPFNPAMIGYVVLLISFPVQMTSWLPPYEIAATTPDMLDTLRMIFTGHTASGGDLTLLRIGIDGISQATPLDTFKTSLRAGHSVKQIMQYPIYSGVLAGVGWQWVNLAWLVGGVFLLWQKTIRWHIPVSFLVTLALCATLGWLFSPGTLASPQLHLLSGATMLGAFFILTDPVTASTTNRGRLIFGALAGVLVWLIRSFGGYPDGVAFAVLLANITVPLIDYYTRPRVYGHRKG.

The next 4 helical transmembrane spans lie at 20 to 40, 44 to 64, 78 to 109, and 123 to 143; these read IMLLVLIAALPGVAAQTWFFG, LFQIVLAAVTALFAEAIVLSL, ALLTGLLLAVSIPPLAPWWMIVLGTGFAIIIA, and PAMIGYVVLLISFPVQMTSWL. T187 carries the post-translational modification FMN phosphoryl threonine. A run of 5 helical transmembrane segments spans residues 214–234, 242–262, 267–287, 301–321, and 322–342; these read VLAGVGWQWVNLAWLVGGVFL, WHIPVSFLVTLALCATLGWLF, LASPQLHLLSGATMLGAFFIL, LIFGALAGVLVWLIRSFGGYP, and DGVAFAVLLANITVPLIDYYT.

The protein belongs to the NqrB/RnfD family. In terms of assembly, the complex is composed of six subunits: RsxA, RsxB, RsxC, RsxD, RsxE and RsxG. FMN serves as cofactor.

It is found in the cell inner membrane. Its function is as follows. Part of a membrane-bound complex that couples electron transfer with translocation of ions across the membrane. Required to maintain the reduced state of SoxR. In Salmonella arizonae (strain ATCC BAA-731 / CDC346-86 / RSK2980), this protein is Ion-translocating oxidoreductase complex subunit D.